We begin with the raw amino-acid sequence, 93 residues long: Small integral membrane protein 41 (93 aa).

Residues 38-58 traverse the membrane as a helical segment; that stretch reads VVLGVLSLLVLCGVLFLGGGL. The segment covering 71–80 has biased composition (basic and acidic residues); it reads REQRASREPE. Residues 71 to 93 are disordered; the sequence is REQRASREPEPGSASGEDGDDDS.

It is found in the membrane. This chain is Small integral membrane protein 41, found in Homo sapiens (Human).